The chain runs to 451 residues: Adenylyltransferase and sulfurtransferase MOCS3 (451 aa).

The tract at residues 42-62 (GEDSDEAEESSNDMPTPQTKL) is disordered. The span at 43–52 (EDSDEAEESS) shows a compositional bias: acidic residues. Phosphothreonine is present on Thr60. Residues Gly99, Asp120, 127-131 (SNLHR), Lys144, and 188-189 (DN) contribute to the ATP site. The Zn(2+) site is built by Cys229 and Cys232. The Glycyl thioester intermediate; for adenylyltransferase activity role is filled by Cys246. Residues Cys304 and Cys307 each coordinate Zn(2+). In terms of domain architecture, Rhodanese spans 353 to 449 (QSQPHLLLDV…WTGSVDATFP (97 aa)). Cys408 functions as the Cysteine persulfide intermediate; for sulfurtransferase activity in the catalytic mechanism.

In the N-terminal section; belongs to the HesA/MoeB/ThiF family. UBA4 subfamily. Zn(2+) is required as a cofactor.

The protein localises to the cytoplasm. The protein resides in the cytosol. It carries out the reaction [molybdopterin-synthase sulfur-carrier protein]-C-terminal Gly-Gly + ATP + H(+) = [molybdopterin-synthase sulfur-carrier protein]-C-terminal Gly-Gly-AMP + diphosphate. The enzyme catalyses [molybdopterin-synthase sulfur-carrier protein]-C-terminal Gly-Gly-AMP + S-sulfanyl-L-cysteinyl-[cysteine desulfurase] + AH2 = [molybdopterin-synthase sulfur-carrier protein]-C-terminal-Gly-aminoethanethioate + L-cysteinyl-[cysteine desulfurase] + A + AMP + 2 H(+). The protein operates within tRNA modification; 5-methoxycarbonylmethyl-2-thiouridine-tRNA biosynthesis. Its pathway is cofactor biosynthesis; molybdopterin biosynthesis. In terms of biological role, plays a central role in 2-thiolation of mcm(5)S(2)U at tRNA wobble positions of cytosolic tRNA(Lys), tRNA(Glu) and tRNA(Gln). Also essential during biosynthesis of the molybdenum cofactor. Acts by mediating the C-terminal thiocarboxylation of sulfur carriers URM1 and MOCS2A. Its N-terminus first activates URM1 and MOCS2A as acyl-adenylates (-COAMP), then the persulfide sulfur on the catalytic cysteine is transferred to URM1 and MOCS2A to form thiocarboxylation (-COSH) of their C-terminus. The reaction probably involves hydrogen sulfide that is generated from the persulfide intermediate and that acts as a nucleophile towards URM1 and MOCS2A. Subsequently, a transient disulfide bond is formed. Does not use thiosulfate as sulfur donor; NFS1 probably acting as a sulfur donor for thiocarboxylation reactions. This Drosophila persimilis (Fruit fly) protein is Adenylyltransferase and sulfurtransferase MOCS3.